The chain runs to 199 residues: UPF0301 protein Ajs_3573 (199 aa).

Belongs to the UPF0301 (AlgH) family.

This is UPF0301 protein Ajs_3573 from Acidovorax sp. (strain JS42).